The primary structure comprises 72 residues: MSLPILDQLEEKIKQAVETIQLLQLEVEELKEKNTTVEQEKETLRQEYEQLKSEQQSFQDRLRSLLGQIDNV.

The stretch at 5–71 (ILDQLEEKIK…LRSLLGQIDN (67 aa)) forms a coiled coil.

It belongs to the ZapB family. In terms of assembly, homodimer. The ends of the coiled-coil dimer bind to each other, forming polymers. Interacts with FtsZ.

The protein resides in the cytoplasm. In terms of biological role, non-essential, abundant cell division factor that is required for proper Z-ring formation. It is recruited early to the divisome by direct interaction with FtsZ, stimulating Z-ring assembly and thereby promoting cell division earlier in the cell cycle. Its recruitment to the Z-ring requires functional FtsA or ZipA. This Actinobacillus pleuropneumoniae serotype 5b (strain L20) protein is Cell division protein ZapB.